Reading from the N-terminus, the 629-residue chain is Probable potassium transport system protein Kup 3 (629 aa).

12 helical membrane passes run 20-40 (LSLS…LYTF), 54-74 (VTTI…IASV), 106-126 (PFII…GTIT), 143-163 (PSLK…LFAI), 171-191 (IGKA…ILGA), 212-232 (FLFS…LCAT), 253-273 (WFGL…ALVL), 291-311 (FLLP…QAII), 343-363 (IYIG…IIGF), 372-392 (AYGI…FIAL), 400-420 (IITS…FFAA), and 425-445 (FING…MMYI).

This sequence belongs to the HAK/KUP transporter (TC 2.A.72) family.

Its subcellular location is the cell inner membrane. The enzyme catalyses K(+)(in) + H(+)(in) = K(+)(out) + H(+)(out). Functionally, transport of potassium into the cell. Likely operates as a K(+):H(+) symporter. This chain is Probable potassium transport system protein Kup 3, found in Legionella pneumophila (strain Paris).